Here is a 316-residue protein sequence, read N- to C-terminus: PDZ and LIM domain protein 3 (316 aa).

Residues 1 to 84 (MPQNVVLPGP…QLCLKIDRAE (84 aa)) enclose the PDZ domain. A phosphoserine mark is found at S18 and S93. Omega-N-methylarginine is present on R164. In terms of domain architecture, LIM zinc-binding spans 244-303 (PLCDKCGSGIVGAVVKARDKYRHPECFVCADCNLNLKQKGYFFVEGELYCETHARARTRP).

As to quaternary structure, interacts with ACTN2. Forms a heterodimer with PDLIM4 (via LIM domain).

Its subcellular location is the cytoplasm. It is found in the myofibril. The protein resides in the sarcomere. The protein localises to the z line. Its function is as follows. May play a role in the organization of actin filament arrays within muscle cells. This Mus musculus (Mouse) protein is PDZ and LIM domain protein 3 (Pdlim3).